The sequence spans 361 residues: Pyruvate dehydrogenase E1 component subunit beta, mitochondrial (361 aa).

Residues 1–27 (MAVNGCMRLLRNGLTSACALEQSVRRL) constitute a mitochondrion transit peptide. Glu-90 is a binding site for thiamine diphosphate. 5 residues coordinate K(+): Ile-143, Ala-191, Val-192, Asp-194, and Asn-196.

As to quaternary structure, heterotetramer of two PDHA1 and two PDHB subunits. The heterotetramer interacts with DLAT, and is part of the multimeric pyruvate dehydrogenase complex that contains multiple copies of pyruvate dehydrogenase (E1), dihydrolipoamide acetyltransferase (DLAT, E2) and lipoamide dehydrogenase (DLD, E3). Thiamine diphosphate serves as cofactor.

Its subcellular location is the mitochondrion matrix. It carries out the reaction N(6)-[(R)-lipoyl]-L-lysyl-[protein] + pyruvate + H(+) = N(6)-[(R)-S(8)-acetyldihydrolipoyl]-L-lysyl-[protein] + CO2. The pyruvate dehydrogenase complex catalyzes the overall conversion of pyruvate to acetyl-CoA and CO(2), and thereby links the glycolytic pathway to the tricarboxylic cycle. In Ascaris suum (Pig roundworm), this protein is Pyruvate dehydrogenase E1 component subunit beta, mitochondrial.